The primary structure comprises 280 residues: MRFVRIAAAASGATVFMWAGFAGAASAASAVRLVPHRAIYDLTLDRADEKSGISGLTGRMVYEFNGSACEGYTTNFRFVTRVDMDEQPQRVTDQQTTTFEDADGKDFRFVNKTFVDKELVKEVRGDAKLEDGKTVVKLSKPKENTLDLKGTQFPTRHMEELIGKAEAGQKFYQTTLFDASEDADRVVATTVVVGKQQAVPDDETKVMGKFSKDQVWPVTIAYFDDKEQQDGMPIYRINFKLYRNGITRDLTMDYGDFSMRGKLVKLDIYDTGKNKTGCSK.

The signal sequence occupies residues 1-24; that stretch reads MRFVRIAAAASGATVFMWAGFAGA. Cys69 and Cys278 are joined by a disulfide.

In terms of assembly, monomer.

The protein localises to the periplasm. Its function is as follows. Functions in the periplasm to maintain cell envelope integrity. This chain is Cell envelope integrity protein EipB, found in Brucella abortus (strain 2308).